Consider the following 621-residue polypeptide: DEAD-box ATP-dependent RNA helicase 39 (621 aa).

The short motif at 112–140 (ENFQELGLSEEVMGALQELNIEVPTEIQC) is the Q motif element. Residues 143–330 (IPAVMERKSV…DEEFQGIEHL (188 aa)) enclose the Helicase ATP-binding domain. 156 to 163 (SHTGSGKT) is a binding site for ATP. Residues 270 to 273 (DEAD) carry the DEAD box motif. Residues 355–505 (KLEALLQVLE…LESLTTDNVR (151 aa)) enclose the Helicase C-terminal domain. Residues 497–621 (ESLTTDNVRR…RGKSSSARAS (125 aa)) form a disordered region. Positions 503–537 (NVRRDAARTHITQEKGRSVKQIREVSKQRNSRDKP) are enriched in basic and acidic residues. Low complexity predominate over residues 555 to 572 (KSSSSSFSKPRKASSPPE).

This sequence belongs to the DEAD box helicase family.

The enzyme catalyses ATP + H2O = ADP + phosphate + H(+). The protein is DEAD-box ATP-dependent RNA helicase 39 (RH39) of Arabidopsis thaliana (Mouse-ear cress).